Here is a 391-residue protein sequence, read N- to C-terminus: ATP phosphoribosyltransferase regulatory subunit (391 aa).

It belongs to the class-II aminoacyl-tRNA synthetase family. HisZ subfamily. Heteromultimer composed of HisG and HisZ subunits.

It localises to the cytoplasm. It functions in the pathway amino-acid biosynthesis; L-histidine biosynthesis; L-histidine from 5-phospho-alpha-D-ribose 1-diphosphate: step 1/9. Functionally, required for the first step of histidine biosynthesis. May allow the feedback regulation of ATP phosphoribosyltransferase activity by histidine. This is ATP phosphoribosyltransferase regulatory subunit from Clostridium kluyveri (strain ATCC 8527 / DSM 555 / NBRC 12016 / NCIMB 10680 / K1).